A 301-amino-acid chain; its full sequence is Oxygen-dependent coproporphyrinogen-III oxidase (301 aa).

Position 90 (Ser-90) interacts with substrate. Positions 94 and 104 each coordinate a divalent metal cation. His-104 (proton donor) is an active-site residue. Position 106–108 (106–108 (NVR)) interacts with substrate. His-143 and His-173 together coordinate a divalent metal cation. The tract at residues 238 to 273 (YVEFNLVWDRGTLFGLQSGGRTESILMSLPPVVKWR) is important for dimerization. Residue 256–258 (GGR) coordinates substrate.

It belongs to the aerobic coproporphyrinogen-III oxidase family. As to quaternary structure, homodimer. A divalent metal cation serves as cofactor.

It localises to the cytoplasm. The enzyme catalyses coproporphyrinogen III + O2 + 2 H(+) = protoporphyrinogen IX + 2 CO2 + 2 H2O. The protein operates within porphyrin-containing compound metabolism; protoporphyrin-IX biosynthesis; protoporphyrinogen-IX from coproporphyrinogen-III (O2 route): step 1/1. Functionally, involved in the heme biosynthesis. Catalyzes the aerobic oxidative decarboxylation of propionate groups of rings A and B of coproporphyrinogen-III to yield the vinyl groups in protoporphyrinogen-IX. In Nitrosomonas europaea (strain ATCC 19718 / CIP 103999 / KCTC 2705 / NBRC 14298), this protein is Oxygen-dependent coproporphyrinogen-III oxidase.